The following is a 287-amino-acid chain: 2' cyclic ADP-D-ribose synthase BtTIR (287 aa).

The 133-residue stretch at 155–287 folds into the TIR domain; sequence KQYDFFISHA…DDIVENLKNL (133 aa). Glu-230 is an active-site residue.

In terms of assembly, homodimer.

The catalysed reaction is NAD(+) = 2'cADPR + nicotinamide + H(+). In terms of biological role, NAD(+) hydrolase (NADase) that cleaves NAD(+) into nicotinamide and 2' cyclic ADP-D-ribose (2'cADPR). This chain is 2' cyclic ADP-D-ribose synthase BtTIR, found in Bacteroides thetaiotaomicron.